The sequence spans 376 residues: Rhodopsin (376 aa).

At 1–52 (MSSWSNQPAMDDYGLPSSNPYGNFTVVDMAPKDILHMIHPHWYQYPPMNPMM) the chain is on the extracellular side. Asn23 carries an N-linked (GlcNAc...) asparagine glycan. The chain crosses the membrane as a helical span at residues 53–77 (YPLLLIFMLFTGILCLAGNFVTIWV). Topologically, residues 78–89 (FMNTKSLRTPAN) are cytoplasmic. A helical transmembrane segment spans residues 90-112 (LLVVNLAMSDFLMMFTMFPPMMV). Over 113–126 (TCYYHTWTLGPTFC) the chain is Extracellular. A disulfide bridge links Cys126 with Cys203. Residues 127-149 (QVYAFLGNLCGCASIWTMVFITF) form a helical membrane-spanning segment. The short motif at 150 to 152 (DRY) is the 'Ionic lock' involved in activated form stabilization element. The Cytoplasmic segment spans residues 150–168 (DRYNVIVKGVAGEPLSTKK). A helical membrane pass occupies residues 169-189 (ASLWILTIWVLSITWCIAPFF). The Extracellular segment spans residues 190-216 (GWNRYVPEGNLTGCGTDYLSEDILSRS). Asn199 is a glycosylation site (N-linked (GlcNAc...) asparagine). Residues 217-237 (YLYDYSTWVYYLPLLPIYCYV) form a helical membrane-spanning segment. At 238–278 (SIIKAVAAHEKGMRDQAKKMGIKSLRNEEAQKTSAECRLAK) the chain is on the cytoplasmic side. Residues 279–300 (IAMTTVALWFIAWTPYLLINWV) form a helical membrane-spanning segment. Topologically, residues 301-311 (GMFARSYLSPV) are extracellular. Residues 312–333 (YTIWGYVFAKANAVYNPIVYAI) form a helical membrane-spanning segment. At Lys321 the chain carries N6-(retinylidene)lysine. Over 334 to 376 (SHPKYRAAMEKKLPCLSCKTESDDVSESASTTTSSAEEKAESA) the chain is Cytoplasmic. The disordered stretch occupies residues 353–376 (TESDDVSESASTTTSSAEEKAESA).

This sequence belongs to the G-protein coupled receptor 1 family. Opsin subfamily. Homodimer. Interacts with GNAQ. In terms of processing, contains one covalently linked retinal chromophore. In terms of tissue distribution, detected on rhabdomere membranes on photoreceptor cells in the retina (at protein level).

It localises to the cell projection. The protein localises to the rhabdomere membrane. Functionally, photoreceptor required for image-forming vision at low light intensity. Can use both retinal and 3-dehydroretinal as visual pigment. Light-induced isomerization of 11-cis to all-trans retinal triggers a conformational change that activates signaling via G-proteins. Signaling via GNAQ probably mediates the activation of phospholipase C. The chain is Rhodopsin (RHO) from Procambarus clarkii (Red swamp crayfish).